The following is a 1502-amino-acid chain: Rho GTPase-activating protein 5 (1502 aa).

FF domains are found at residues 267-325, 366-420, 427-481, and 482-548; these read QLVV…HIEQ, KLME…HVQH, RVEM…HQRE, and IVEK…HIGF. A 3'-nitrotyrosine modification is found at Tyr-550. 2 positions are modified to phosphoserine: Ser-590 and Ser-765. The pG1 pseudoGTPase domain occupies 590–763; the sequence is STNIDKVNLF…LESVKHNLDV (174 aa). Residues 779-944 enclose the pG2 pseudoGTPase domain; the sequence is RIVMCAMCGD…FSDVLEKKNM (166 aa). A phosphoserine mark is found at Ser-951 and Ser-968. Disordered regions lie at residues 975-1004, 1022-1050, and 1069-1089; these read YNNY…LPTP, HSTP…PKTN, and NPRK…DPSD. A compositionally biased stretch (pro residues) spans 1036–1045; sequence VPPPIKPKPV. Ser-1115 carries the post-translational modification Phosphoserine. 2 disordered regions span residues 1125 to 1156 and 1168 to 1254; these read FVNN…YKYK and YRRT…TRRN. A compositionally biased stretch (basic and acidic residues) spans 1140–1150; that stretch reads RTSKSHGERRP. Phosphoserine is present on residues Ser-1173, Ser-1176, Ser-1195, Ser-1202, and Ser-1218. Positions 1262–1449 constitute a Rho-GAP domain; the sequence is MPLQDLVTAE…TFIQQCQFFF (188 aa).

May interact with RASA1/p120GAP. In terms of tissue distribution, detected in skin fibroblasts (at protein level).

Its subcellular location is the cytoplasm. The protein localises to the cell membrane. In terms of biological role, GTPase-activating protein for Rho family members. The protein is Rho GTPase-activating protein 5 (ARHGAP5) of Homo sapiens (Human).